The following is a 145-amino-acid chain: Neuropeptide-like protein 68 (145 aa).

The signal sequence occupies residues 1–15; that stretch reads MLLVLLFSLFSVGFG. Residues 41 to 65 form a disordered region; the sequence is SSSSEDDTPDFPSLRDKRGVDPMSI.

Its subcellular location is the secreted. This is Neuropeptide-like protein 68 from Caenorhabditis elegans.